We begin with the raw amino-acid sequence, 935 residues long: Potassium channel AKT1 (935 aa).

At 1–106 the chain is on the cytoplasmic side; the sequence is MARWGAARMA…YDRRYRIWET (106 aa). A helical transmembrane segment spans residues 107–127; it reads FLIVLVVYSAWVSPFEFGFIP. At 128-136 the chain is on the extracellular side; the sequence is KPTGALATA. The helical transmembrane segment at 137–157 threads the bilayer; it reads DNVVNAFFAVDIILTFFVAYL. Residues 158–178 are Cytoplasmic-facing; it reads DKMSYMLEDDPKKIAWRYSTT. Residues 179-199 traverse the membrane as a helical segment; that stretch reads WLVLDVASTIPSEFARRILPS. Residues 200 to 205 lie on the Extracellular side of the membrane; sequence KLRSYG. The helical; Voltage-sensor transmembrane segment at 206–226 threads the bilayer; the sequence is FFNMLRLWRLRRVSSLFSRLE. Topologically, residues 227–240 are cytoplasmic; it reads KDRHFNYFWVRCAK. Residues 241-261 traverse the membrane as a helical segment; sequence LICVTLFAVHCAACFYYLLAD. The Extracellular portion of the chain corresponds to 262–288; the sequence is RYPVPTSTWIGNYMADFHERSLWIRYV. The segment at residues 289-308 is an intramembrane region (pore-forming); it reads TSVYWSITTLTTVGYGDLHA. Topologically, residues 309 to 312 are extracellular; it reads ENTR. A helical membrane pass occupies residues 313–333; the sequence is EMIFNIFYMLFNLGLTAYLIG. Residues 334–935 lie on the Cytoplasmic side of the membrane; the sequence is NMTNLVVHGT…WDAEKMKGKS (602 aa). 419-538 lines the a nucleoside 3',5'-cyclic phosphate pocket; that stretch reads LFQGVSNDLI…TIIMNNLIQF (120 aa). 6 ANK repeats span residues 565-594, 598-627, 631-660, 662-691, 695-724, and 728-757; these read DLPITLCFAVTRGDDFLLHQLLKRGMDPNE, DGHTALHIAASKGNEQCVRLLLEYGADPNA, EGKVPLWEALCEKHAAVVQLLVEGGADLSS, DTGLYACIAVEESDTELLNDIIHYGGDVNR, DGTTALHRAVCDGNVQMAELLLEHGADIDK, and NGWTPRALAEQQGHDDIQLLFRSRKAATAS. The interval 826–854 is disordered; the sequence is SQAQRETDHPLSRGGLAATGSPNPSSGSR. Residues 845–854 show a composition bias toward polar residues; that stretch reads GSPNPSSGSR. The 77-residue stretch at 859–935 folds into the KHA domain; sequence RVTISCPEKG…WDAEKMKGKS (77 aa).

This sequence belongs to the potassium channel family. Plant (TC 1.A.1.4) subfamily. The potassium channel is probably a homo- or heterotetrameric complex of pore-forming subunits. As to expression, highly expressed in the epidermis and endodermis of roots, and at lower level in cells of the vasculature and the cortex. Expressed in xylem parenchyma, phloem and mesophyll cells of leaves.

The protein localises to the membrane. Its function is as follows. Highly selective inward-rectifying potassium channel that mediates potassium uptake by plant roots. This chain is Potassium channel AKT1 (AKT1), found in Oryza sativa subsp. indica (Rice).